The primary structure comprises 507 residues: Inactive alanine aminotransferase (507 aa).

The pyridoxal 5'-phosphate site is built by alanine 173, serine 174, tyrosine 199, asparagine 255, and serine 324. Lysine 327 is modified (N6-(pyridoxal phosphate)lysine). Arginine 336 is a pyridoxal 5'-phosphate binding site.

The protein belongs to the class-I pyridoxal-phosphate-dependent aminotransferase family. Alanine aminotransferase subfamily. As to quaternary structure, homodimer. Pyridoxal 5'-phosphate serves as cofactor.

It is found in the cytoplasm. The protein localises to the nucleus. Inactive alanine aminotransferase. Forms a catalytically active Schiff base with PLP, but lacks alanine transaminase activity, probably due to an altered structural conformation of the dimeric enzyme. This suggests this protein may have a yet undiscovered physiological function. The polypeptide is Inactive alanine aminotransferase (ALT2) (Saccharomyces cerevisiae (strain ATCC 204508 / S288c) (Baker's yeast)).